Here is a 66-residue protein sequence, read N- to C-terminus: Toxin Boma6a (66 aa).

One can recognise an LCN-type CS-alpha/beta domain in the interval 2–64; it reads RDAYIAQNYN…VPIKVEGKCH (63 aa). Cystine bridges form between Cys12–Cys63, Cys16–Cys36, Cys22–Cys46, and Cys26–Cys48.

Belongs to the long (4 C-C) scorpion toxin superfamily. Sodium channel inhibitor family. Alpha subfamily. In terms of tissue distribution, expressed by the venom gland.

The protein resides in the secreted. Alpha toxins bind voltage-independently at site-3 of sodium channels (Nav) and inhibit the inactivation of the activated channels, thereby blocking neuronal transmission. The polypeptide is Toxin Boma6a (Buthus occitanus mardochei (Moroccan scorpion)).